The primary structure comprises 587 residues: Pentatricopeptide repeat-containing protein OGR1, mitochondrial (587 aa).

Residues 1-30 (MSVSAAARHLESLLPRLASLRHYLQFHARL) constitute a mitochondrion transit peptide. PPR repeat units lie at residues 145–179 (DVRL…DVAT), 200–203 (FHRL), 217–251 (NEVT…GLDR), 252–286 (NVRV…DQTL), 287–315 (VSYN…MPTR), 319–349 (DGVT…MRVA), 351–381 (NMKH…MPFP), and 383–417 (DIVL…GSNV). The tract at residues 386-461 (LWQTLLGAAK…VPGFSYTEID (76 aa)) is type E motif. Residues 462-492 (GVMHKFINGDKEHPRWQEIYRALEDIVSRIS) are type E(+) motif. The interval 493-587 (ELGYEPETSN…DGQCSCRDYW (95 aa)) is type DYW motif.

Its subcellular location is the mitochondrion. Its function is as follows. Involved in multiple sites RNA editing events in mitochondria. Essential for C-to-U RNA editing at seven specific sites of nad2, nad4, cox2, cox3 and ccmC transcripts, all coding for proteins involved in the mitochondrial electron transport chain coupled to ATP generation. Required for normal growth and development. The chain is Pentatricopeptide repeat-containing protein OGR1, mitochondrial from Oryza sativa subsp. japonica (Rice).